A 326-amino-acid polypeptide reads, in one-letter code: Polycomb complex protein BMI-1 (326 aa).

The segment at 18–57 (CVLCGGYFIDATTIIECLHSFCKTCIVRYLETSKYCPICD) adopts an RING-type zinc-finger fold. The short motif at 81–95 (KLVPGLFKNEMKRRR) is the Nuclear localization signal element. An interaction with PHC2 region spans residues 162 to 182 (RYLRCPAAMTVMHLRKFLRSK). An interaction with E4F1 region spans residues 164–228 (LRCPAAMTVM…GPLPLKYRVR (65 aa)). The tract at residues 236–326 (ISHQRDGLTN…VNGSSATSSG (91 aa)) is disordered. Low complexity predominate over residues 266–278 (PSTSSCLPSPSTP). A compositionally biased stretch (polar residues) spans 279-309 (VQSPHPQFPHISSTMNGTSNSPSGNHQSSFA). Over residues 315 to 326 (SSVNGSSATSSG) the composition is skewed to low complexity.

In terms of assembly, component of a PRC1-like complex. Identified in a PRC1-like HPRC-H complex with CBX2, CBX4, CBX8, PHC1, PHC2, PHC3 RING1 and RNF2. Interacts with RNF2/RING2. Interacts with RING1. Part of a complex that contains RNF2, UB2D3 and BMI1, where RNF2 and BMI1 form a tight heterodimer, and UB2D3 interacts only with RNF2. The complex composed of RNF2, UB2D3 and BMI1 binds nucleosomes, and has activity only with nucleosomal histone H2A. Interacts with CBX7 and CBX8. Interacts with SPOP. Part of a complex consisting of BMI1, CUL3 and SPOP. Interacts with E4F1. Interacts with PHC2. Interacts with zinc finger protein ZNF277. May be part of a complex including at least ZNF277, BMI1 and RNF2/RING2. Monoubiquitinated. May be polyubiquitinated; which does not lead to proteasomal degradation.

It localises to the nucleus. It is found in the cytoplasm. Component of a Polycomb group (PcG) multiprotein PRC1-like complex, a complex class required to maintain the transcriptionally repressive state of many genes, including Hox genes, throughout development. PcG PRC1 complex acts via chromatin remodeling and modification of histones; it mediates monoubiquitination of histone H2A 'Lys-119', rendering chromatin heritably changed in its expressibility. The complex composed of RNF2, UB2D3 and BMI1 binds nucleosomes, and has activity only with nucleosomal histone H2A. In the PRC1-like complex, regulates the E3 ubiquitin-protein ligase activity of RNF2/RING2. This Homo sapiens (Human) protein is Polycomb complex protein BMI-1 (BMI1).